We begin with the raw amino-acid sequence, 261 residues long: Indole-3-glycerol phosphate synthase (261 aa).

This sequence belongs to the TrpC family.

It carries out the reaction 1-(2-carboxyphenylamino)-1-deoxy-D-ribulose 5-phosphate + H(+) = (1S,2R)-1-C-(indol-3-yl)glycerol 3-phosphate + CO2 + H2O. Its pathway is amino-acid biosynthesis; L-tryptophan biosynthesis; L-tryptophan from chorismate: step 4/5. The protein is Indole-3-glycerol phosphate synthase of Burkholderia pseudomallei (strain 668).